The following is a 94-amino-acid chain: Co-chaperonin GroES (94 aa).

It belongs to the GroES chaperonin family. Heptamer of 7 subunits arranged in a ring. Interacts with the chaperonin GroEL.

Its subcellular location is the cytoplasm. In terms of biological role, together with the chaperonin GroEL, plays an essential role in assisting protein folding. The GroEL-GroES system forms a nano-cage that allows encapsulation of the non-native substrate proteins and provides a physical environment optimized to promote and accelerate protein folding. GroES binds to the apical surface of the GroEL ring, thereby capping the opening of the GroEL channel. The chain is Co-chaperonin GroES from Lactococcus lactis subsp. cremoris (strain MG1363).